Reading from the N-terminus, the 321-residue chain is Arabinan endo-1,5-alpha-L-arabinosidase A (321 aa).

A signal peptide spans 1–19 (MYQLLSVASVPLLASLVHG). Asp34 functions as the Proton acceptor in the catalytic mechanism. Glu200 functions as the Proton donor in the catalytic mechanism. An N-linked (GlcNAc...) asparagine glycan is attached at Asn295.

This sequence belongs to the glycosyl hydrolase 43 family.

It carries out the reaction Endohydrolysis of (1-&gt;5)-alpha-arabinofuranosidic linkages in (1-&gt;5)-arabinans.. Its pathway is glycan metabolism; L-arabinan degradation. Functionally, its preferred substrate is linear 1,5-alpha-L-arabinan. The enzyme activity is progressively reduced as 1,5-alpha-chains become shorter or more highly substituted. In Aspergillus niger, this protein is Arabinan endo-1,5-alpha-L-arabinosidase A (abnA).